Here is a 439-residue protein sequence, read N- to C-terminus: MTSNTPVSDQLFDRARSLMPGGVNSPVRAFGSVGGTPKFMVSAKGAYLTDADGKEYVDLVCSWGPALLGHAHPAVLDAVHAAVDRGLSFGASTPDEANLAAIVKDRVSAVERLRMVSTGTEATMTAVRLARGFTGRNLIIKFAGCYHGHLDGLLAAAGSGVATLALPGSAGVTEATAAETLVLPYNDLAAVEAAFAAHGKNIAAVITEAAPANMGVVTPGEGFNAGLSRITKEHGALLILDEVLTGFRTGYAGYWGLTGRQEGWAPDLLTFGKVIGGGMPTAALGGRADVMDYLAPVGPVYQAGTLSGNPVAMAAGVATLTNATPEVYAYVDARSLELSAALSSALDAAGVDHSIQRAGNLFSVAFGTSAHGVHNYDDAQRQESFRYAPFFHSMLDSGVYLPPSVFEAWFLSAAHDDAAMNRIVDALPAAAKAAAGASA.

K273 is modified (N6-(pyridoxal phosphate)lysine).

The protein belongs to the class-III pyridoxal-phosphate-dependent aminotransferase family. HemL subfamily. As to quaternary structure, homodimer. The cofactor is pyridoxal 5'-phosphate.

The protein localises to the cytoplasm. The catalysed reaction is (S)-4-amino-5-oxopentanoate = 5-aminolevulinate. The protein operates within porphyrin-containing compound metabolism; protoporphyrin-IX biosynthesis; 5-aminolevulinate from L-glutamyl-tRNA(Glu): step 2/2. The chain is Glutamate-1-semialdehyde 2,1-aminomutase from Paenarthrobacter aurescens (strain TC1).